Consider the following 158-residue polypeptide: MANKTEQTVIDLISPIIEAHNDLLWDLTFTKEGGQKVLRILLDKPDHQFITMNDLTLFTQEVNELLDTVDPDPIPEAYVLDISSPGADRPLKELWHFEWAKEANENILVSLFVAKEGQKKWQGKIADLNKDGLTLTTTNGRLPLTFDEIAKAILDVQF.

This sequence belongs to the RimP family.

The protein resides in the cytoplasm. Its function is as follows. Required for maturation of 30S ribosomal subunits. This chain is Ribosome maturation factor RimP, found in Leuconostoc mesenteroides subsp. mesenteroides (strain ATCC 8293 / DSM 20343 / BCRC 11652 / CCM 1803 / JCM 6124 / NCDO 523 / NBRC 100496 / NCIMB 8023 / NCTC 12954 / NRRL B-1118 / 37Y).